The chain runs to 467 residues: NALCN channel auxiliary factor 1 (467 aa).

A helical transmembrane segment spans residues 40-60; that stretch reads LSLASLLFFTVLLSDHLWFCA. Residues 121–161 form a disordered region; sequence MGESSPAAQAHRLLSASSSPTLPPSPGGGGGSKGNRGKNNR. Residues Asn160, Asn226, and Asn254 are each glycosylated (N-linked (GlcNAc...) asparagine). 7 disulfides stabilise this stretch: Cys200–Cys270, Cys235–Cys322, Cys255–Cys270, Cys313–Cys350, Cys333–Cys386, Cys339–Cys385, and Cys343–Cys370. Residues 390 to 408 show a composition bias toward basic and acidic residues; sequence SEEQTAPRPKGTVDRRDSC. The tract at residues 390–409 is disordered; that stretch reads SEEQTAPRPKGTVDRRDSCP. The chain crosses the membrane as a helical span at residues 426–446; it reads LKLCVLVLILLHTVLTASAAQ. N-linked (GlcNAc...) asparagine glycosylation occurs at Asn462.

It belongs to the NALF family. Component of the NALCN channel complex. NALCN complex consists of NALCN and auxiliary subunits, UNC79, UNC80 and NACL1. These auxiliary subunits are essential for the NALCN channel function.

It localises to the cell membrane. Auxillary component of the NALCN sodium channel complex, a channel that regulates the resting membrane potential and controls neuronal excitability. The polypeptide is NALCN channel auxiliary factor 1 (Mus musculus (Mouse)).